We begin with the raw amino-acid sequence, 418 residues long: Protease LasA (418 aa).

A signal peptide spans Met-1 to Ala-31. The propeptide occupies His-32–Leu-236. The Zn(2+) site is built by His-259 and Asp-272. A disulfide bond links Cys-301 and Cys-347. Active-site proton donor/acceptor residues include His-317 and His-356. His-358 provides a ligand contact to Zn(2+). Residues Cys-391 and Cys-406 are joined by a disulfide bond.

Belongs to the peptidase M23A family. Zn(2+) serves as cofactor.

It is found in the secreted. In terms of biological role, involved in proteolysis and elastolysis (degradation of the host protein elastin). Has staphylolytic activity (degrades pentaglycine cross-links in cell wall peptidoglycan), preferring Gly-Gly-|-X substrates where X is Ala or Gly. Enhances the elastolytic but not proteolytic activity of elastase (lasB) and elastolytic activity of other proteases. Degradation of elastin is likely to contribute to the pathogenicity of P.aeruginosa. The chain is Protease LasA (lasA) from Pseudomonas aeruginosa (strain UCBPP-PA14).